Consider the following 113-residue polypeptide: Protein NATD1 (113 aa).

The region spanning Glu22 to Gln112 is the N-acetyltransferase domain.

It belongs to the NATD1 family.

In Homo sapiens (Human), this protein is Protein NATD1 (NATD1).